A 560-amino-acid chain; its full sequence is Beta-hexosaminidase subunit B1 (560 aa).

An N-terminal signal peptide occupies residues 1 to 25; that stretch reads MIILKRNIVFLLIIIIVLGIFIATS. Residues Asn-59, Asn-69, Asn-81, Asn-99, Asn-161, Asn-293, and Asn-346 are each glycosylated (N-linked (GlcNAc...) asparagine). Glu-359 functions as the Proton donor in the catalytic mechanism. 4 N-linked (GlcNAc...) asparagine glycosylation sites follow: Asn-366, Asn-436, Asn-472, and Asn-547.

It belongs to the glycosyl hydrolase 20 family.

It localises to the lysosome. It catalyses the reaction Hydrolysis of terminal non-reducing N-acetyl-D-hexosamine residues in N-acetyl-beta-D-hexosaminides.. Its function is as follows. Responsible for the degradation of GM2 gangliosides, and a variety of other molecules containing terminal N-acetyl hexosamines. The chain is Beta-hexosaminidase subunit B1 (hexb1) from Dictyostelium discoideum (Social amoeba).